A 386-amino-acid polypeptide reads, in one-letter code: 1-deoxy-D-xylulose 5-phosphate reductoisomerase (386 aa).

NADPH-binding residues include threonine 7, glycine 8, serine 9, isoleucine 10, alanine 33, and asparagine 124. 1-deoxy-D-xylulose 5-phosphate is bound at residue lysine 125. Glutamate 126 contacts NADPH. Residue aspartate 148 coordinates Mn(2+). Serine 149, glutamate 150, serine 174, and histidine 197 together coordinate 1-deoxy-D-xylulose 5-phosphate. Glutamate 150 serves as a coordination point for Mn(2+). Glycine 203 contacts NADPH. The 1-deoxy-D-xylulose 5-phosphate site is built by serine 210, asparagine 215, lysine 216, and glutamate 219. Residue glutamate 219 participates in Mn(2+) binding.

It belongs to the DXR family. The cofactor is Mg(2+). Requires Mn(2+) as cofactor.

The enzyme catalyses 2-C-methyl-D-erythritol 4-phosphate + NADP(+) = 1-deoxy-D-xylulose 5-phosphate + NADPH + H(+). Its pathway is isoprenoid biosynthesis; isopentenyl diphosphate biosynthesis via DXP pathway; isopentenyl diphosphate from 1-deoxy-D-xylulose 5-phosphate: step 1/6. Catalyzes the NADPH-dependent rearrangement and reduction of 1-deoxy-D-xylulose-5-phosphate (DXP) to 2-C-methyl-D-erythritol 4-phosphate (MEP). In Kitasatospora griseola (Streptomyces griseolosporeus), this protein is 1-deoxy-D-xylulose 5-phosphate reductoisomerase.